Here is a 552-residue protein sequence, read N- to C-terminus: Urocanate hydratase (552 aa).

Residues 49–50 (GG), glutamine 127, 173–175 (GMG), aspartate 193, 239–240 (NA), 260–264 (QTSAH), 270–271 (YI), and tyrosine 319 contribute to the NAD(+) site. Residue cysteine 407 is part of the active site. Glycine 489 provides a ligand contact to NAD(+).

The protein belongs to the urocanase family. Requires NAD(+) as cofactor.

It localises to the cytoplasm. It carries out the reaction 4-imidazolone-5-propanoate = trans-urocanate + H2O. It participates in amino-acid degradation; L-histidine degradation into L-glutamate; N-formimidoyl-L-glutamate from L-histidine: step 2/3. Functionally, catalyzes the conversion of urocanate to 4-imidazolone-5-propionate. The polypeptide is Urocanate hydratase (Bacillus cereus (strain G9842)).